The primary structure comprises 288 residues: Phosphatidylserine decarboxylase proenzyme (288 aa).

Active-site charge relay system; for autoendoproteolytic cleavage activity residues include Asp-89, His-146, and Ser-252. Ser-252 acts as the Schiff-base intermediate with substrate; via pyruvic acid; for decarboxylase activity in catalysis. Position 252 is a pyruvic acid (Ser); by autocatalysis (Ser-252).

This sequence belongs to the phosphatidylserine decarboxylase family. PSD-B subfamily. Prokaryotic type I sub-subfamily. As to quaternary structure, heterodimer of a large membrane-associated beta subunit and a small pyruvoyl-containing alpha subunit. Pyruvate serves as cofactor. In terms of processing, is synthesized initially as an inactive proenzyme. Formation of the active enzyme involves a self-maturation process in which the active site pyruvoyl group is generated from an internal serine residue via an autocatalytic post-translational modification. Two non-identical subunits are generated from the proenzyme in this reaction, and the pyruvate is formed at the N-terminus of the alpha chain, which is derived from the carboxyl end of the proenzyme. The autoendoproteolytic cleavage occurs by a canonical serine protease mechanism, in which the side chain hydroxyl group of the serine supplies its oxygen atom to form the C-terminus of the beta chain, while the remainder of the serine residue undergoes an oxidative deamination to produce ammonia and the pyruvoyl prosthetic group on the alpha chain. During this reaction, the Ser that is part of the protease active site of the proenzyme becomes the pyruvoyl prosthetic group, which constitutes an essential element of the active site of the mature decarboxylase.

The protein localises to the cell membrane. It carries out the reaction a 1,2-diacyl-sn-glycero-3-phospho-L-serine + H(+) = a 1,2-diacyl-sn-glycero-3-phosphoethanolamine + CO2. It participates in phospholipid metabolism; phosphatidylethanolamine biosynthesis; phosphatidylethanolamine from CDP-diacylglycerol: step 2/2. Catalyzes the formation of phosphatidylethanolamine (PtdEtn) from phosphatidylserine (PtdSer). The sequence is that of Phosphatidylserine decarboxylase proenzyme from Shewanella frigidimarina (strain NCIMB 400).